We begin with the raw amino-acid sequence, 176 residues long: Sarcoplasmic calcium-binding protein (176 aa).

At T1 the chain carries N-acetylthreonine. EF-hand domains lie at 3–38 (YLVS…FTDL), 55–90 (KWWD…AFLA), 91–126 (TMTA…FGHE), and 127–160 (NESV…SFVT). Positions 16, 18, 20, and 27 each coordinate Ca(2+). Ca(2+) contacts are provided by D104, D106, D108, S110, and E115.

Like parvalbumins, SCPs seem to be more abundant in fast contracting muscles, but no functional relationship can be established from this distribution. This is Sarcoplasmic calcium-binding protein from Mizuhopecten yessoensis (Japanese scallop).